Here is a 106-residue protein sequence, read N- to C-terminus: Toxin-like structure LSTX-D7 (106 aa).

Residues 1–20 (MMKVLVVFALLVTLISYSSS) form the signal peptide. Residues 21–41 (EGIDDLEADELLSLMANEQTR) constitute a propeptide that is removed on maturation. 4 disulfide bridges follow: Cys45–Cys60, Cys52–Cys69, Cys59–Cys85, and Cys71–Cys83.

The protein belongs to the neurotoxin 19 (CSTX) family. 02 (D7) subfamily. Expressed by the venom gland.

The protein localises to the secreted. This Lycosa singoriensis (Wolf spider) protein is Toxin-like structure LSTX-D7.